The following is a 295-amino-acid chain: NAD kinase (295 aa).

The active-site Proton acceptor is aspartate 72. Residues 72–73, 146–147, arginine 157, lysine 174, aspartate 176, 187–192, and glutamine 247 contribute to the NAD(+) site; these read DG, ND, and TAYALS.

Belongs to the NAD kinase family. The cofactor is a divalent metal cation.

Its subcellular location is the cytoplasm. It catalyses the reaction NAD(+) + ATP = ADP + NADP(+) + H(+). Involved in the regulation of the intracellular balance of NAD and NADP, and is a key enzyme in the biosynthesis of NADP. Catalyzes specifically the phosphorylation on 2'-hydroxyl of the adenosine moiety of NAD to yield NADP. The sequence is that of NAD kinase from Pseudomonas aeruginosa (strain LESB58).